Consider the following 199-residue polypeptide: Recombination protein RecR (199 aa).

A C4-type zinc finger spans residues 58–73; that stretch reads CKKCFNLTSEEECEIC. Residues 81–175 form the Toprim domain; sequence KIICVVAETK…KVTRIAYGLP (95 aa).

Belongs to the RecR family.

Functionally, may play a role in DNA repair. It seems to be involved in an RecBC-independent recombinational process of DNA repair. It may act with RecF and RecO. The chain is Recombination protein RecR from Prochlorococcus marinus subsp. pastoris (strain CCMP1986 / NIES-2087 / MED4).